Consider the following 276-residue polypeptide: Rhomboid protease GlpG (276 aa).

The next 6 membrane-spanning stretches (helical) occupy residues 94 to 114 (GPVT…MSLI), 142 to 162 (IFMH…WYLG), 169 to 189 (LGSG…GYVQ), 192 to 212 (FSGP…GYVW), 229 to 249 (LIIF…GMSM), and 250 to 270 (ANGA…VDTL). Catalysis depends on Ser-201, which acts as the Nucleophile. His-254 is a catalytic residue.

It belongs to the peptidase S54 family.

It localises to the cell inner membrane. The catalysed reaction is Cleaves type-1 transmembrane domains using a catalytic dyad composed of serine and histidine that are contributed by different transmembrane domains.. In terms of biological role, rhomboid-type serine protease that catalyzes intramembrane proteolysis. This is Rhomboid protease GlpG from Salmonella choleraesuis (strain SC-B67).